Here is a 399-residue protein sequence, read N- to C-terminus: Tryptophan synthase beta chain (399 aa).

Lys86 carries the post-translational modification N6-(pyridoxal phosphate)lysine.

The protein belongs to the TrpB family. Tetramer of two alpha and two beta chains. Pyridoxal 5'-phosphate serves as cofactor.

The catalysed reaction is (1S,2R)-1-C-(indol-3-yl)glycerol 3-phosphate + L-serine = D-glyceraldehyde 3-phosphate + L-tryptophan + H2O. Its pathway is amino-acid biosynthesis; L-tryptophan biosynthesis; L-tryptophan from chorismate: step 5/5. Its function is as follows. The beta subunit is responsible for the synthesis of L-tryptophan from indole and L-serine. This is Tryptophan synthase beta chain (trpB) from Buchnera aphidicola subsp. Schizaphis graminum (strain Sg).